The following is a 151-amino-acid chain: 3-dehydroquinate dehydratase (151 aa).

Tyr-24 serves as the catalytic Proton acceptor. Substrate-binding residues include Asn-76, His-82, and Asp-89. Catalysis depends on His-102, which acts as the Proton donor. Residues 103–104 (VS) and Arg-113 contribute to the substrate site.

The protein belongs to the type-II 3-dehydroquinase family. In terms of assembly, homododecamer.

The catalysed reaction is 3-dehydroquinate = 3-dehydroshikimate + H2O. It functions in the pathway metabolic intermediate biosynthesis; chorismate biosynthesis; chorismate from D-erythrose 4-phosphate and phosphoenolpyruvate: step 3/7. Functionally, catalyzes a trans-dehydration via an enolate intermediate. The chain is 3-dehydroquinate dehydratase from Rhodopseudomonas palustris (strain ATCC BAA-98 / CGA009).